The sequence spans 175 residues: Alkyl hydroperoxide reductase AhpD (175 aa).

The Proton donor role is filled by cysteine 131. Cysteine 131 and cysteine 134 form a disulfide bridge. The Cysteine sulfenic acid (-SOH) intermediate role is filled by cysteine 134.

Belongs to the AhpD family.

It catalyses the reaction N(6)-[(R)-dihydrolipoyl]-L-lysyl-[lipoyl-carrier protein] + a hydroperoxide = N(6)-[(R)-lipoyl]-L-lysyl-[lipoyl-carrier protein] + an alcohol + H2O. Functionally, antioxidant protein with alkyl hydroperoxidase activity. Required for the reduction of the AhpC active site cysteine residues and for the regeneration of the AhpC enzyme activity. In Brucella canis (strain ATCC 23365 / NCTC 10854 / RM-666), this protein is Alkyl hydroperoxide reductase AhpD.